The following is a 227-amino-acid chain: Extracellular small neutral protease (227 aa).

A signal peptide spans 1–29 (MRITLPLLSTAVGLGLTAAVLGTGPAATA). Positions 30-42 (AAPQEPVRAAQLG) are excised as a propeptide. D156 and T158 together coordinate Ca(2+). Position 163 (H163) interacts with Zn(2+). E164 is an active-site residue. The Zn(2+) site is built by H167 and D173. The cysteines at positions 179 and 192 are disulfide-linked.

It belongs to the peptidase M7 family. Ca(2+) serves as cofactor. Requires Zn(2+) as cofactor. Post-translationally, the N-terminus is blocked.

It localises to the secreted. The catalysed reaction is Hydrolyzes proteins with a preference for Tyr or Phe in the P1' position. Has no action on amino-acid p-nitroanilides.. The chain is Extracellular small neutral protease (snpA) from Streptomyces lividans.